The sequence spans 488 residues: UDP-N-acetylmuramoyl-L-alanyl-D-glutamate--2,6-diaminopimelate ligase (488 aa).

Ser-31 is a binding site for UDP-N-acetyl-alpha-D-muramoyl-L-alanyl-D-glutamate. An ATP-binding site is contributed by 109–115 (GTNGKTS). Residues Asn-150, 151-152 (TT), Ser-178, and Arg-186 each bind UDP-N-acetyl-alpha-D-muramoyl-L-alanyl-D-glutamate. The residue at position 218 (Lys-218) is an N6-carboxylysine. Residues Arg-384, 408–411 (DNPR), Gly-458, and Glu-462 each bind meso-2,6-diaminopimelate. Residues 408-411 (DNPR) carry the Meso-diaminopimelate recognition motif motif.

This sequence belongs to the MurCDEF family. MurE subfamily. Requires Mg(2+) as cofactor. Post-translationally, carboxylation is probably crucial for Mg(2+) binding and, consequently, for the gamma-phosphate positioning of ATP.

It is found in the cytoplasm. It carries out the reaction UDP-N-acetyl-alpha-D-muramoyl-L-alanyl-D-glutamate + meso-2,6-diaminopimelate + ATP = UDP-N-acetyl-alpha-D-muramoyl-L-alanyl-gamma-D-glutamyl-meso-2,6-diaminopimelate + ADP + phosphate + H(+). It participates in cell wall biogenesis; peptidoglycan biosynthesis. In terms of biological role, catalyzes the addition of meso-diaminopimelic acid to the nucleotide precursor UDP-N-acetylmuramoyl-L-alanyl-D-glutamate (UMAG) in the biosynthesis of bacterial cell-wall peptidoglycan. The sequence is that of UDP-N-acetylmuramoyl-L-alanyl-D-glutamate--2,6-diaminopimelate ligase from Bacillus licheniformis (strain ATCC 14580 / DSM 13 / JCM 2505 / CCUG 7422 / NBRC 12200 / NCIMB 9375 / NCTC 10341 / NRRL NRS-1264 / Gibson 46).